The sequence spans 119 residues: Protein phosphatase EYA4 (119 aa).

Belongs to the HAD-like hydrolase superfamily. EYA family. Mg(2+) serves as cofactor.

The protein resides in the cytoplasm. It localises to the nucleus. The enzyme catalyses O-phospho-L-tyrosyl-[protein] + H2O = L-tyrosyl-[protein] + phosphate. In terms of biological role, tyrosine phosphatase that specifically dephosphorylates 'Tyr-142' of histone H2AX (H2AXY142ph). 'Tyr-142' phosphorylation of histone H2AX plays a central role in DNA repair and acts as a mark that distinguishes between apoptotic and repair responses to genotoxic stress. Promotes efficient DNA repair by dephosphorylating H2AX, promoting the recruitment of DNA repair complexes containing MDC1. Its function as histone phosphatase probably explains its role in transcription regulation during organogenesis. May be involved in development of the eye. The protein is Protein phosphatase EYA4 (eya4) of Takifugu rubripes (Japanese pufferfish).